The following is a 142-amino-acid chain: uncharacterized protein (142 aa).

Residues 1-22 form a disordered region; it reads MSGSVNQNTDQHSQDSSSTPNN. The next 2 helical transmembrane spans lie at 63 to 83 and 109 to 129; these read LFVM…VLLV and IIDG…FVDL.

Its subcellular location is the membrane. This is an uncharacterized protein from Acanthamoeba polyphaga mimivirus (APMV).